The primary structure comprises 99 residues: Large ribosomal subunit protein bL25 (99 aa).

Belongs to the bacterial ribosomal protein bL25 family. Part of the 50S ribosomal subunit; part of the 5S rRNA/L5/L18/L25 subcomplex. Contacts the 5S rRNA. Binds to the 5S rRNA independently of L5 and L18.

This is one of the proteins that binds to the 5S RNA in the ribosome where it forms part of the central protuberance. This chain is Large ribosomal subunit protein bL25, found in Nostoc sp. (strain PCC 7120 / SAG 25.82 / UTEX 2576).